The primary structure comprises 491 residues: MQPSSTLAPVAPIIFLAIAIAAINWIDLARGKGKQSVAYPLSLLTTLVLTAWFGMNAATGETHYAFANLVVIDPMANVLSAFCAAGLFVTLVYTRRYLAERDMFAGEFYMLALFTLGGQIVMITGNNFLTLYLGLELLSLSSYALVALRRESRVTSESAMKYFVLGALASGFLLYGISMMYGATGSLNLGEVFRAVESGRINTTMLAFGVVFIVAGLSFKLGAAPFHMWIPDIYQGSPTAVTLLIAGGPKVAAFALFIRVLVEGLLPLASDWQMMLVVLSIISLAIGNLTAIVQSNLKRMLAYSTISHMGFVLLGLLSGVVANKADGAADAYSSAMFYSVTYLLTTLGTFGIILLRTSKGFEAETLEDLKGMSRRNPWFAFLMLVMMFSLAGIPPTVGFYAKLAVLDAVVQAGMTWLAVVAVLFSLIGAFYYLRIVKLMYFDAPVGEEQLEATFGLRSMLSVNGAAVILLGLFPAALMNLCYQAIRSTLGS.

14 helical membrane passes run 6–26 (TLAP…INWI), 37–57 (VAYP…GMNA), 69–89 (LVVI…GLFV), 103–123 (MFAG…IVMI), 128–148 (FLTL…LVAL), 163–183 (FVLG…MYGA), 206–226 (LAFG…AAPF), 238–258 (PTAV…ALFI), 273–293 (QMML…TAIV), 301–321 (LAYS…SGVV), 335–355 (AMFY…IILL), 379–399 (FAFL…TVGF), 413–433 (GMTW…FYYL), and 458–478 (SMLS…AALM).

The protein belongs to the complex I subunit 2 family. In terms of assembly, NDH-1 is composed of 14 different subunits. Subunits NuoA, H, J, K, L, M, N constitute the membrane sector of the complex.

It is found in the cell inner membrane. It catalyses the reaction a quinone + NADH + 5 H(+)(in) = a quinol + NAD(+) + 4 H(+)(out). NDH-1 shuttles electrons from NADH, via FMN and iron-sulfur (Fe-S) centers, to quinones in the respiratory chain. The immediate electron acceptor for the enzyme in this species is believed to be ubiquinone. Couples the redox reaction to proton translocation (for every two electrons transferred, four hydrogen ions are translocated across the cytoplasmic membrane), and thus conserves the redox energy in a proton gradient. The polypeptide is NADH-quinone oxidoreductase subunit N (Cupriavidus taiwanensis (strain DSM 17343 / BCRC 17206 / CCUG 44338 / CIP 107171 / LMG 19424 / R1) (Ralstonia taiwanensis (strain LMG 19424))).